A 375-amino-acid chain; its full sequence is Deoxyhypusine synthase-like protein (375 aa).

This sequence belongs to the deoxyhypusine synthase family.

The chain is Deoxyhypusine synthase-like protein from Elusimicrobium minutum (strain Pei191).